Here is a 79-residue protein sequence, read N- to C-terminus: Acyl carrier protein (79 aa).

Residues 2–77 (SDIEARVKKI…NAIDYANTHH (76 aa)) form the Carrier domain. O-(pantetheine 4'-phosphoryl)serine is present on S37.

Belongs to the acyl carrier protein (ACP) family. In terms of processing, 4'-phosphopantetheine is transferred from CoA to a specific serine of apo-ACP by AcpS. This modification is essential for activity because fatty acids are bound in thioester linkage to the sulfhydryl of the prosthetic group.

The protein resides in the cytoplasm. It functions in the pathway lipid metabolism; fatty acid biosynthesis. Carrier of the growing fatty acid chain in fatty acid biosynthesis. The chain is Acyl carrier protein from Polaromonas naphthalenivorans (strain CJ2).